Reading from the N-terminus, the 27-residue chain is rRNA/tRNA 2'-O-methyltransferase fibrillarin (27 aa).

The span at 1–12 (XFEGRGGFGGRG) shows a compositional bias: gly residues. A disordered region spans residues 1–27 (XFEGRGGFGGRGGGDRGGRGXGGFGGG). An asymmetric dimethylarginine mark is found at Arg5, Arg11, Arg16, and Arg19.

It belongs to the methyltransferase superfamily. Fibrillarin family. In terms of assembly, component of box C/D small nucleolar ribonucleoprotein (snoRNP) particles. It is associated with the U3, U8 and U13 small nuclear RNAs.

It localises to the nucleus. It is found in the nucleolus. It catalyses the reaction L-glutaminyl-[histone H2A] + S-adenosyl-L-methionine = N(5)-methyl-L-glutaminyl-[histone H2A] + S-adenosyl-L-homocysteine + H(+). S-adenosyl-L-methionine-dependent methyltransferase that has the ability to methylate both RNAs and proteins. Involved in pre-rRNA processing. Utilizes the methyl donor S-adenosyl-L-methionine to catalyze the site-specific 2'-hydroxyl methylation of ribose moieties in pre-ribosomal RNA. Site specificity is provided by a guide RNA that base pairs with the substrate. Methylation occurs at a characteristic distance from the sequence involved in base pairing with the guide RNA. Also acts as a protein methyltransferase by mediating methylation of 'Gln-105' of histone H2A (H2AQ105me), a modification that impairs binding of the FACT complex and is specifically present at 35S ribosomal DNA locus. The polypeptide is rRNA/tRNA 2'-O-methyltransferase fibrillarin (Physarum polycephalum (Slime mold)).